We begin with the raw amino-acid sequence, 286 residues long: Co-chaperone protein DjlA (286 aa).

The Periplasmic segment spans residues 1-6; the sequence is MQFIGK. A helical transmembrane segment spans residues 7-31; sequence IIGFFIGYKLFGGLFGGLLGIFIGH. At 32-286 the chain is on the cytoplasmic side; sequence LADKKLYELG…DLICKTKGWK (255 aa). The region spanning 220-286 is the J domain; that stretch reads DAYTVLGINE…DLICKTKGWK (67 aa).

As to quaternary structure, homodimer.

It is found in the cell inner membrane. Its function is as follows. Regulatory DnaK co-chaperone. Direct interaction between DnaK and DjlA is needed for the induction of the wcaABCDE operon, involved in the synthesis of a colanic acid polysaccharide capsule, possibly through activation of the RcsB/RcsC phosphotransfer signaling pathway. The colanic acid capsule may help the bacterium survive conditions outside the host. This chain is Co-chaperone protein DjlA, found in Haemophilus ducreyi (strain 35000HP / ATCC 700724).